The chain runs to 180 residues: MSRIGKMPVQLADQAKIEIKDNVITVSGPKGTLQQQLVPEVSVDIADGQITVTRADDTKRSRAMHGLYRMLVSNMVDGVTKGFTRKLLISGVGFRAEMKSDLLALTLGYSHQIYFKAPEEVTIACPDPTTIEISGIDKALVGQVAAKIRSFRKPEPYRGKGIKFSDEVVRRKEGKTAGKK.

It belongs to the universal ribosomal protein uL6 family. As to quaternary structure, part of the 50S ribosomal subunit.

Functionally, this protein binds to the 23S rRNA, and is important in its secondary structure. It is located near the subunit interface in the base of the L7/L12 stalk, and near the tRNA binding site of the peptidyltransferase center. This Prosthecochloris aestuarii (strain DSM 271 / SK 413) protein is Large ribosomal subunit protein uL6.